Consider the following 289-residue polypeptide: Energy-coupling factor transporter ATP-binding protein EcfA2 (289 aa).

One can recognise an ABC transporter domain in the interval 7–251 (IILDNVSYTY…IELLTKIEID (245 aa)). 44 to 51 (GTTGSGKS) provides a ligand contact to ATP.

It belongs to the ABC transporter superfamily. Energy-coupling factor EcfA family. In terms of assembly, forms a stable energy-coupling factor (ECF) transporter complex composed of 2 membrane-embedded substrate-binding proteins (S component), 2 ATP-binding proteins (A component) and 2 transmembrane proteins (T component).

It is found in the cell membrane. ATP-binding (A) component of a common energy-coupling factor (ECF) ABC-transporter complex. Unlike classic ABC transporters this ECF transporter provides the energy necessary to transport a number of different substrates. In Mycoplasma capricolum subsp. capricolum (strain California kid / ATCC 27343 / NCTC 10154), this protein is Energy-coupling factor transporter ATP-binding protein EcfA2.